The chain runs to 330 residues: Low-redox potential peroxidase (330 aa).

The first 24 residues, 1–24, serve as a signal peptide directing secretion; that stretch reads MRSSTHIFVSFVVYCGVFVTSAIA. A glycan (N-linked (GlcNAc...) asparagine) is linked at N27. Cystine bridges form between C34–C285, C54–C123, and C251–C314. G69, D71, and S73 together coordinate Ca(2+). Heme b is bound at residue H178. 4 residues coordinate Ca(2+): S179, D196, T198, and D203.

Belongs to the peroxidase family. Ligninase subfamily. The cofactor is Ca(2+). Heme b serves as cofactor.

The protein resides in the secreted. The enzyme catalyses 2 a phenolic donor + H2O2 = 2 a phenolic radical donor + 2 H2O. Functionally, can oxidize the lignin redox mediator veratryl alcohol to veratryl aldehyde. May be involved in oxidation of lignocellulose substrates. The polypeptide is Low-redox potential peroxidase (LnP) (Taiwanofungus camphoratus (Poroid brown-rot fungus)).